Here is a 264-residue protein sequence, read N- to C-terminus: Thymidylate synthase (264 aa).

Arginine 21 is a binding site for dUMP. Histidine 51 contacts (6R)-5,10-methylene-5,6,7,8-tetrahydrofolate. Position 126–127 (126–127 (RR)) interacts with dUMP. The active-site Nucleophile is the cysteine 146. DUMP is bound by residues 166–169 (RSAD), asparagine 177, and 207–209 (HLY). Aspartate 169 contributes to the (6R)-5,10-methylene-5,6,7,8-tetrahydrofolate binding site. Alanine 263 contributes to the (6R)-5,10-methylene-5,6,7,8-tetrahydrofolate binding site.

The protein belongs to the thymidylate synthase family. Bacterial-type ThyA subfamily. In terms of assembly, homodimer.

It is found in the cytoplasm. It carries out the reaction dUMP + (6R)-5,10-methylene-5,6,7,8-tetrahydrofolate = 7,8-dihydrofolate + dTMP. Its pathway is pyrimidine metabolism; dTTP biosynthesis. In terms of biological role, catalyzes the reductive methylation of 2'-deoxyuridine-5'-monophosphate (dUMP) to 2'-deoxythymidine-5'-monophosphate (dTMP) while utilizing 5,10-methylenetetrahydrofolate (mTHF) as the methyl donor and reductant in the reaction, yielding dihydrofolate (DHF) as a by-product. This enzymatic reaction provides an intracellular de novo source of dTMP, an essential precursor for DNA biosynthesis. The sequence is that of Thymidylate synthase from Rhizobium etli (strain ATCC 51251 / DSM 11541 / JCM 21823 / NBRC 15573 / CFN 42).